A 65-amino-acid chain; its full sequence is uncharacterized protein (65 aa).

Residues 37–57 (ILAIMTSVLPVLLIYIIWIFI) traverse the membrane as a helical segment.

The protein resides in the cell membrane. This is an uncharacterized protein from Bacillus subtilis (strain 168).